The following is a 430-amino-acid chain: Adenylosuccinate synthetase (430 aa).

GTP-binding positions include 11-17 (GDEGKGK) and 39-41 (GHS). D12 acts as the Proton acceptor in catalysis. Residues D12 and G39 each contribute to the Mg(2+) site. IMP is bound by residues 12–15 (DEGK), 37–40 (NAGH), T129, R143, N221, T236, and R300. The active-site Proton donor is H40. 296-302 (VSTGRKR) is a binding site for substrate. GTP is bound by residues R302, 328–330 (KLD), and 412–414 (GTG).

This sequence belongs to the adenylosuccinate synthetase family. As to quaternary structure, homodimer. Mg(2+) is required as a cofactor.

The protein localises to the cytoplasm. The catalysed reaction is IMP + L-aspartate + GTP = N(6)-(1,2-dicarboxyethyl)-AMP + GDP + phosphate + 2 H(+). Its pathway is purine metabolism; AMP biosynthesis via de novo pathway; AMP from IMP: step 1/2. In terms of biological role, plays an important role in the de novo pathway and in the salvage pathway of purine nucleotide biosynthesis. Catalyzes the first committed step in the biosynthesis of AMP from IMP. The sequence is that of Adenylosuccinate synthetase from Neurospora crassa (strain ATCC 24698 / 74-OR23-1A / CBS 708.71 / DSM 1257 / FGSC 987).